We begin with the raw amino-acid sequence, 178 residues long: Large ribosomal subunit protein uL6 (178 aa).

This sequence belongs to the universal ribosomal protein uL6 family. In terms of assembly, part of the 50S ribosomal subunit.

This protein binds to the 23S rRNA, and is important in its secondary structure. It is located near the subunit interface in the base of the L7/L12 stalk, and near the tRNA binding site of the peptidyltransferase center. The chain is Large ribosomal subunit protein uL6 from Thermoplasma volcanium (strain ATCC 51530 / DSM 4299 / JCM 9571 / NBRC 15438 / GSS1).